Reading from the N-terminus, the 96-residue chain is Large ribosomal subunit protein eL21 (96 aa).

The segment at 1-66 is disordered; that stretch reads MPSSNGPLEG…FDGQTGTVEG (66 aa).

This sequence belongs to the eukaryotic ribosomal protein eL21 family. As to quaternary structure, part of the 50S ribosomal subunit. Interacts with protein L18 and binds the 5S rRNA. Has been cross-linked to L18.

This is one of 5 proteins that mediate the attachment of the 5S rRNA onto the large ribosomal subunit, stabilizing the orientation of adjacent RNA domains. This chain is Large ribosomal subunit protein eL21 (rpl21e), found in Haloarcula marismortui (strain ATCC 43049 / DSM 3752 / JCM 8966 / VKM B-1809) (Halobacterium marismortui).